The following is a 397-amino-acid chain: 3-ketoacyl-CoA thiolase, mitochondrial (397 aa).

Residues 1 to 16 (MALLRGVFVVAAKRTP) constitute a mitochondrion; not cleaved transit peptide. Residue K25 is modified to N6-acetyllysine; alternate. Position 25 is an N6-succinyllysine; alternate (K25). K45 is modified (N6-succinyllysine). The active-site Acyl-thioester intermediate is the C92. At T119 the chain carries Phosphothreonine. Phosphoserine is present on S121. Y127 is modified (phosphotyrosine). T136 is subject to Phosphothreonine. Position 137 is an N6-acetyllysine; alternate (K137). K137 carries the N6-succinyllysine; alternate modification. The residue at position 140 (S140) is a Phosphoserine. N6-acetyllysine; alternate occurs at positions 143, 171, 191, and 209. N6-succinyllysine; alternate occurs at positions 143, 171, 191, and 209. 3 positions are modified to N6-succinyllysine: K211, K212, and K214. The CoA site is built by R224 and T227. An N6-acetyllysine; alternate modification is found at K234. The residue at position 234 (K234) is an N6-succinyllysine; alternate. Position 240 is an N6-succinyllysine (K240). At K241 the chain carries N6-acetyllysine. Residue S251 coordinates CoA. N6-acetyllysine occurs at positions 269 and 270. K305 is subject to N6-acetyllysine; alternate. An N6-succinyllysine; alternate modification is found at K305. At S310 the chain carries Phosphoserine. Residue K312 is modified to N6-acetyllysine; alternate. K312 bears the N6-succinyllysine; alternate mark. Residue S333 is modified to Phosphoserine. N6-acetyllysine occurs at positions 340 and 375. Residue C382 is the Proton donor/acceptor of the active site.

It belongs to the thiolase-like superfamily. Thiolase family. As to quaternary structure, homotetramer. Interacts with BNIP3.

The protein localises to the mitochondrion. It carries out the reaction an acyl-CoA + acetyl-CoA = a 3-oxoacyl-CoA + CoA. It catalyses the reaction 2 acetyl-CoA = acetoacetyl-CoA + CoA. The enzyme catalyses acetyl-CoA + H2O = acetate + CoA + H(+). The catalysed reaction is propanoyl-CoA + H2O = propanoate + CoA + H(+). It carries out the reaction butanoyl-CoA + H2O = butanoate + CoA + H(+). It catalyses the reaction hexanoyl-CoA + H2O = hexanoate + CoA + H(+). The enzyme catalyses octanoyl-CoA + H2O = octanoate + CoA + H(+). The catalysed reaction is decanoyl-CoA + H2O = decanoate + CoA + H(+). It carries out the reaction dodecanoyl-CoA + H2O = dodecanoate + CoA + H(+). It catalyses the reaction tetradecanoyl-CoA + H2O = tetradecanoate + CoA + H(+). The enzyme catalyses hexadecanoyl-CoA + H2O = hexadecanoate + CoA + H(+). The protein operates within lipid metabolism; fatty acid beta-oxidation. In terms of biological role, in the production of energy from fats, this is one of the enzymes that catalyzes the last step of the mitochondrial beta-oxidation pathway, an aerobic process breaking down fatty acids into acetyl-CoA. Using free coenzyme A/CoA, catalyzes the thiolytic cleavage of medium- to long-chain unbranched 3-oxoacyl-CoAs into acetyl-CoA and a fatty acyl-CoA shortened by two carbon atoms. Also catalyzes the condensation of two acetyl-CoA molecules into acetoacetyl-CoA and could be involved in the production of ketone bodies. Also displays hydrolase activity on various fatty acyl-CoAs. Thereby, could be responsible for the production of acetate in a side reaction to beta-oxidation. Abolishes BNIP3-mediated apoptosis and mitochondrial damage. The chain is 3-ketoacyl-CoA thiolase, mitochondrial (ACAA2) from Homo sapiens (Human).